A 546-amino-acid chain; its full sequence is T-complex protein 1 subunit zeta (546 aa).

The residue at position 2 (serine 2) is an N-acetylserine. A Phosphoserine modification is found at serine 249.

It belongs to the TCP-1 chaperonin family. In terms of assembly, heterooligomeric complex of about 850 to 900 kDa that forms two stacked rings, 12 to 16 nm in diameter.

The protein localises to the cytoplasm. Its function is as follows. Molecular chaperone; assists the folding of proteins upon ATP hydrolysis. Known to play a role, in vitro, in the folding of actin and tubulin. In yeast may play a role in mitotic spindle formation. The protein is T-complex protein 1 subunit zeta (CCT6) of Saccharomyces cerevisiae (strain ATCC 204508 / S288c) (Baker's yeast).